The primary structure comprises 166 residues: MSQYFTLFRIEPAFDIGTENLEQTYRALAARFHPDKFASASAFEQKQAVMMSSTINDAYRTLKNPIDRAAYLLKTSGIDADAPEHTSFAPDFLMQQMEWRETLMEARAGNNLESLKNLDNEIRAEQEKLFCGLKQSFARQDCDTAAQQVRQGRFLDKLRHEISSAL.

The region spanning Gln3–Thr75 is the J domain.

It belongs to the HscB family. As to quaternary structure, interacts with HscA and stimulates its ATPase activity.

Its function is as follows. Co-chaperone involved in the maturation of iron-sulfur cluster-containing proteins. Seems to help targeting proteins to be folded toward HscA. The protein is Co-chaperone protein HscB homolog of Neisseria gonorrhoeae (strain NCCP11945).